The primary structure comprises 643 residues: Transducer protein Htr8 (643 aa).

The next 5 helical transmembrane spans lie at 48–68 (VFVL…GTES), 79–99 (PGIL…LASI), 115–134 (VLAS…EAHF), 149–169 (WLPF…FGMI), and 184–204 (PWVW…ALMA). In terms of domain architecture, HAMP spans 273–326 (ERLEATANTYGAAMARAADGDLSVRLDPDVENDAMAAIAASFNEMLDETETTIR). The Methyl-accepting transducer domain occupies 345-581 (GVVEIEDASG…EAVSMIAEVS (237 aa)).

The protein belongs to the methyl-accepting chemotaxis (MCP) protein family. In terms of processing, methylated by CheR.

Its subcellular location is the cell membrane. Its function is as follows. Potentially involved in chemo- or phototactic signal transduction. The chain is Transducer protein Htr8 (htr8) from Halobacterium salinarum (strain ATCC 29341 / DSM 671 / R1).